A 256-amino-acid chain; its full sequence is Small ribosomal subunit protein bS18m (256 aa).

Residues 19 to 106 (GQRTAQFSTT…GGQRYGSNSQ (88 aa)) are disordered. Residues 21-30 (RTAQFSTTSP) are compositionally biased toward polar residues. Residues 44-66 (NAPRTNTNTSSPSSNNNNNAGSS) are compositionally biased toward low complexity.

This sequence belongs to the bacterial ribosomal protein bS18 family. As to quaternary structure, component of the mitochondrial small ribosomal subunit (mt-SSU). Mature N.crassa 74S mitochondrial ribosomes consist of a small (37S) and a large (54S) subunit. The 37S small subunit contains a 16S ribosomal RNA (16S mt-rRNA) and 32 different proteins. The 54S large subunit contains a 23S rRNA (23S mt-rRNA) and 42 different proteins.

Its subcellular location is the mitochondrion. Component of the mitochondrial ribosome (mitoribosome), a dedicated translation machinery responsible for the synthesis of mitochondrial genome-encoded proteins, including at least some of the essential transmembrane subunits of the mitochondrial respiratory chain. The mitoribosomes are attached to the mitochondrial inner membrane and translation products are cotranslationally integrated into the membrane. This is Small ribosomal subunit protein bS18m (rsm18) from Neurospora crassa (strain ATCC 24698 / 74-OR23-1A / CBS 708.71 / DSM 1257 / FGSC 987).